We begin with the raw amino-acid sequence, 309 residues long: Jacalin-related lectin 25 (309 aa).

The Jacalin-type lectin domain occupies M8–P190.

The protein belongs to the jacalin lectin family.

The protein is Jacalin-related lectin 25 (JAL25) of Arabidopsis thaliana (Mouse-ear cress).